Here is a 520-residue protein sequence, read N- to C-terminus: MAQALAQPPLVVTTVVPDPPPPPPPPHPKPYALRYMADLLGRIGIMDTDKDGNISPQSPRSPRSPRNNILMGKYELGKLLGHGTFAKVYLAQNIKSGDKVAIKVIDKEKIMKSGLVAHIKREISILRRVRHPYIVHLFEVMATKSKIYFVMEYVGGGELFNTVAKGRLPEETARRYFQQLISSVSFCHGRGVYHRDLKPENLLLDNKGNLKVSDFGLSAVAEQLRQDGLCHTFCGTPAYIAPEVLTRKGYDAAKADVWSCGVILFVLMAGHIPFYDKNIMVMYKKIYKGEFRCPRWFSSDLVRLLTRLLDTNPDTRITIPEIMKNRWFKKGFKHVKFYIEDDKLCREDEDEEEEASSSGRSSTVSESDAEFDVKRMGIGSMPRPSSLNAFDIISFSSGFDLSGLFEEEGGEGTRFVSGAPVSKIISKLEEIAKIVSFTVRKKEWSLRLEGCREGAKGPLTIAAEIFELTPSLVVVEVKKKGGDREEYEEFCNKELRPELEKLIHEEVVVEEALYLPSDTE.

Disordered regions lie at residues 1–29 (MAQALAQPPLVVTTVVPDPPPPPPPPHPK) and 48–67 (TDKDGNISPQSPRSPRSPRN). The span at 17-29 (PDPPPPPPPPHPK) shows a compositional bias: pro residues. Positions 55–66 (SPQSPRSPRSPR) are enriched in low complexity. In terms of domain architecture, Protein kinase spans 74-328 (YELGKLLGHG…IPEIMKNRWF (255 aa)). Residues 80–88 (LGHGTFAKV) and Lys-103 each bind ATP. Asp-196 acts as the Proton acceptor in catalysis. The interval 214-243 (DFGLSAVAEQLRQDGLCHTFCGTPAYIAPE) is activation loop. Residue Ser-218 is modified to Phosphoserine. At Thr-232 the chain carries Phosphothreonine. Residues 349 to 368 (EDEEEEASSSGRSSTVSESD) form a disordered region. The segment covering 356–366 (SSSGRSSTVSE) has biased composition (low complexity). An NAF domain is found at 382 to 406 (PRPSSLNAFDIISFSSGFDLSGLFE). A PPI region spans residues 410-439 (GEGTRFVSGAPVSKIISKLEEIAKIVSFTV).

It belongs to the protein kinase superfamily. CAMK Ser/Thr protein kinase family. SNF1 subfamily. In terms of assembly, interacts with CBL1 and CBL9. Mn(2+) serves as cofactor.

It carries out the reaction L-seryl-[protein] + ATP = O-phospho-L-seryl-[protein] + ADP + H(+). The catalysed reaction is L-threonyl-[protein] + ATP = O-phospho-L-threonyl-[protein] + ADP + H(+). Its function is as follows. CIPK serine-threonine protein kinases interact with CBL proteins. Binding of a CBL protein to the regulatory NAF domain of CIPK protein lead to the activation of the kinase in a calcium-dependent manner. This Arabidopsis thaliana (Mouse-ear cress) protein is CBL-interacting serine/threonine-protein kinase 18 (CIPK18).